Here is a 486-residue protein sequence, read N- to C-terminus: Protein DETOXIFICATION 53 (486 aa).

A run of 12 helical transmembrane segments spans residues 15 to 35, 45 to 65, 94 to 114, 130 to 150, 159 to 179, 187 to 207, 240 to 260, 267 to 287, 312 to 332, 346 to 366, 386 to 406, and 413 to 433; these read CPIV…MWFL, GGAL…KGLS, LLIV…PIFL, MLFF…RTFL, LTIS…VFVV, GVAI…LVYT, AISV…CGLL, VAAM…PFAI, VIGL…VTAL, ILGL…GNSP, VNLC…TFGF, and LWFG…YTLI. Residues 448-474 are disordered; sequence TSAAADKSHSEDETVHAEVQDDDDVSS. Residues 453-466 are compositionally biased toward basic and acidic residues; the sequence is DKSHSEDETVHAEV.

Belongs to the multi antimicrobial extrusion (MATE) (TC 2.A.66.1) family.

It localises to the membrane. In Arabidopsis thaliana (Mouse-ear cress), this protein is Protein DETOXIFICATION 53.